We begin with the raw amino-acid sequence, 1849 residues long: TATA-binding protein-associated factor 172 (1849 aa).

A disordered region spans residues 77–97 (NPVPRTRQEPTSESSMEDSPT). Residues 85-97 (EPTSESSMEDSPT) show a composition bias toward polar residues. A phosphoserine mark is found at Ser-91 and Ser-95. Residues 191 to 207 (QAAELIDSEFRAGMSNR) carry the Nuclear localization signal motif. Residues 219–247 (FAKQRSRDAVETNEKSNDSTDGEPEEKRR) are disordered. Positions 223–236 (RSRDAVETNEKSND) are enriched in basic and acidic residues. 8 HEAT repeats span residues 385-422 (TGVH…VRQD), 426-463 (TLLP…SLVY), 513-550 (QSLT…TQDQ), 554-596 (SWLI…KASV), 818-855 (TSSF…LQLR), 872-910 (EKLN…QCTT), 1102-1139 (PLLV…IATM), and 1182-1219 (PYIV…LMPL). Positions 1278 to 1453 (AFLNKYKLHG…WSLFDFLMPG (176 aa)) constitute a Helicase ATP-binding domain. Residue 1291–1298 (DDMGLGKT) participates in ATP binding. The DEGH box motif lies at 1404–1407 (DEGH). One can recognise a Helicase C-terminal domain in the interval 1636–1790 (SGTESVVAQH…QENSSLQSMG (155 aa)).

It belongs to the SNF2/RAD54 helicase family. In terms of assembly, associates with TBP to form B-TFIID. Binds DRAP1.

Its subcellular location is the nucleus. Its function is as follows. Regulates transcription in association with TATA binding protein (TBP). Removes TBP from the TATA box in an ATP-dependent manner. In Homo sapiens (Human), this protein is TATA-binding protein-associated factor 172 (BTAF1).